The following is a 208-amino-acid chain: Cysteine-rich protein 2 (208 aa).

Residues 5–57 (CPKCDKTVYFAEKVSSLGKDWHKFCLKCERCSKTLTPGGHAEHDGKPFCHKPC) enclose the LIM zinc-binding 1 domain. Lys23 carries the post-translational modification N6-acetyllysine. The tract at residues 98 to 119 (AEERKASGPPKGPSRASSVTTF) is disordered. Ser104 is modified (phosphoserine). Residues 126–178 (CPRCSKKVYFAEKVTSLGKDWHRPCLRCERCGKTLTPGGHAEHDGQPYCHKPC) form the LIM zinc-binding 2 domain. N6-acetyllysine occurs at positions 138 and 144.

In terms of assembly, interacts with TGFB1I1. In terms of tissue distribution, widespread tissue expression; highest levels in the heart.

The polypeptide is Cysteine-rich protein 2 (CRIP2) (Homo sapiens (Human)).